We begin with the raw amino-acid sequence, 604 residues long: uncharacterized protein (604 aa).

Residues Glu-239 to Asn-259 form a disordered region.

This is an uncharacterized protein from Escherichia coli (strain K12).